Reading from the N-terminus, the 132-residue chain is L-ectoine synthase (132 aa).

The protein belongs to the ectoine synthase family.

The catalysed reaction is (2S)-4-acetamido-2-aminobutanoate = L-ectoine + H2O. It functions in the pathway amine and polyamine biosynthesis; ectoine biosynthesis; L-ectoine from L-aspartate 4-semialdehyde: step 3/3. In terms of biological role, catalyzes the circularization of gamma-N-acetyl-alpha,gamma-diaminobutyric acid (ADABA) to ectoine (1,4,5,6-tetrahydro-2-methyl-4-pyrimidine carboxylic acid), which is an excellent osmoprotectant. The polypeptide is L-ectoine synthase (Teredinibacter turnerae (strain ATCC 39867 / T7901)).